Here is a 122-residue protein sequence, read N- to C-terminus: MSEVIEMVSKQPRKQRKARYTAPLHIRQKFMGARLSEALAKQYGTRSAAVITGDTVKIMRGDFKGTEGKVQSVSLMDGTIAVDGVISTKVDGTEVPRPINPSNVMITKLEMKDGRRASSIKK.

Belongs to the universal ribosomal protein uL24 family. Part of the 50S ribosomal subunit.

In terms of biological role, one of two assembly initiator proteins, it binds directly to the 5'-end of the 23S rRNA, where it nucleates assembly of the 50S subunit. Located at the polypeptide exit tunnel on the outside of the subunit. In Methanosarcina mazei (strain ATCC BAA-159 / DSM 3647 / Goe1 / Go1 / JCM 11833 / OCM 88) (Methanosarcina frisia), this protein is Large ribosomal subunit protein uL24.